The sequence spans 483 residues: Macrophage receptor MARCO (483 aa).

Residues 1 to 48 are Cytoplasmic-facing; it reads MGNKKALKEEAFLGSAEEGADFDQAMFPVMETFEINDPMPKKRNWGSF. A helical; Signal-anchor for type II membrane protein transmembrane segment spans residues 49-69; sequence CTAVMAIHLILLTAGTTLLTL. Over 70–483 the chain is Extracellular; that stretch reads KVLSLQKWIL…HNEDAGVECR (414 aa). 2 N-linked (GlcNAc...) asparagine glycosylation sites follow: N85 and N137. A disordered region spans residues 146–386; the sequence is RIKGERGSPG…GEKGEKGQSF (241 aa). The region spanning 148–383 is the Collagen-like domain; the sequence is KGERGSPGIP…GQKGEKGEKG (236 aa). Low complexity predominate over residues 153–166; the sequence is SPGIPGLQGPPGIK. The segment covering 193–216 has biased composition (basic and acidic residues); it reads KGSKGDKGLIGPKGEHGTKGDKGD. Positions 273–286 are enriched in low complexity; that stretch reads VPGTPGAAGPSGAK. Basic and acidic residues predominate over residues 376 to 386; that stretch reads KGEKGEKGQSF. Residues 389 to 483 enclose the SRCR domain; that stretch reads VRIVGGTNRG…HNEDAGVECR (95 aa). 3 disulfides stabilise this stretch: C412/C472, C425/C482, and C452/C462.

In terms of assembly, homotrimer; disulfide-linked. Trimers may assemble in larger oligomers thus resulting in the creation of a large surface capable of interacting with very large ligands. N-glycosylated. Expressed in alveolar macrophages, macrophages of lymph node sinues, and Kupffer cells in liver (at protein level).

It is found in the cell membrane. Functionally, pattern recognition receptor (PRR) which binds Gram-positive and Gram-negative bacteria. Also plays a role in binding of unopsonized particles by alveolar macrophages. Binds to the secretoglobin SCGB3A2. The sequence is that of Macrophage receptor MARCO (MARCO) from Mesocricetus auratus (Golden hamster).